The primary structure comprises 455 residues: Ornithine decarboxylase (455 aa).

Lys-67 bears the N6-(pyridoxal phosphate)lysine mark. Residues Ser-197, Gly-234, and 271–274 (EPGR) each bind pyridoxal 5'-phosphate. Position 297 is a phosphoserine; by CK2 (Ser-297). 325–326 (YD) contributes to the substrate binding site. Cys-354 acts as the Proton donor; shared with dimeric partner in catalysis. Cys-354 is subject to S-nitrosocysteine. Asp-355 provides a ligand contact to substrate. Pyridoxal 5'-phosphate is bound at residue Tyr-383.

The protein belongs to the Orn/Lys/Arg decarboxylase class-II family. In terms of assembly, homodimer. Only the dimer is catalytically active, as the active sites are constructed of residues from both monomers. The cofactor is pyridoxal 5'-phosphate.

It catalyses the reaction L-ornithine + H(+) = putrescine + CO2. It functions in the pathway amine and polyamine biosynthesis; putrescine biosynthesis via L-ornithine pathway; putrescine from L-ornithine: step 1/1. With respect to regulation, inhibited by antizymes (AZs) OAZ1, OAZ2 and OAZ3 in response to polyamine levels. AZs inhibit the assembly of the functional homodimer by binding to ODC monomers. Additionally, OAZ1 targets ODC monomers for ubiquitin-independent proteolytic destruction by the 26S proteasome. Functionally, catalyzes the first and rate-limiting step of polyamine biosynthesis that converts ornithine into putrescine, which is the precursor for the polyamines, spermidine and spermine. Polyamines are essential for cell proliferation and are implicated in cellular processes, ranging from DNA replication to apoptosis. In Cricetulus griseus (Chinese hamster), this protein is Ornithine decarboxylase (ODC1).